Reading from the N-terminus, the 508-residue chain is Fasciclin-3 (508 aa).

A signal peptide spans 1–20; it reads MSRIVFICLAAILTDALTWA. Gln-21 is subject to Pyrrolidone carboxylic acid. Over 21–346 the chain is Extracellular; it reads QVNVEPNTAL…SSKPPSSSLD (326 aa). The region spanning 44-106 is the Ig-like V-type domain; that stretch reads GRSINYCRIE…NGQVKCSLGV (63 aa). 2 consecutive Ig-like C2-type domains span residues 126 to 223 and 236 to 310; these read PIIE…ESVP and APVH…GLTL. Cys-150 and Cys-211 form a disulfide bridge. N-linked (GlcNAc...) asparagine glycosylation is found at Asn-160, Asn-257, and Asn-300. Residues 347 to 370 traverse the membrane as a helical segment; sequence VAAIVGIVVAVAVLVLVVLLIVFA. Over 371–508 the chain is Cytoplasmic; that stretch reads RATGRWCFGG…QSTSPVWTFK (138 aa). A disordered region spans residues 381 to 439; sequence KSIKTPTNETSDTESADIKATSTATATTTMGGVGVSAEEEETVNEQESPQEQQQQQQKK. Residue Ser-382 is modified to Phosphoserine. Composition is skewed to low complexity over residues 400–409 and 425–437; these read ATSTATATTT and EQESPQEQQQQQQ. Phosphoserine is present on Ser-459.

As to expression, expressed on different subsets of axon bundles (fascicles) in insect embryos.

It localises to the membrane. Its function is as follows. Mediates cell adhesion in a Ca(2+)-independent manner. It plays a role in axon outgrowth, guidance and fasciculation of the developing nervous system. Function in neurons is essential for adult survival, and is important for climbing behavior and activity. The chain is Fasciclin-3 (Fas3) from Drosophila melanogaster (Fruit fly).